Here is a 61-residue protein sequence, read N- to C-terminus: Protein stunted (61 aa).

A sufficient for mth activation region spans residues Ala3–Ser15.

The protein belongs to the eukaryotic ATPase epsilon family.

In terms of biological role, activates the G-protein coupled receptor mth in vitro, leading to increased intracellular calcium ion levels. This is Protein stunted from Drosophila melanogaster (Fruit fly).